A 34-amino-acid polypeptide reads, in one-letter code: Cytochrome b6-f complex subunit 8 (34 aa).

A helical membrane pass occupies residues 3 to 23 (LLTFGWAALLAVFTFSLAMVV).

The protein belongs to the PetN family. The 4 large subunits of the cytochrome b6-f complex are cytochrome b6, subunit IV (17 kDa polypeptide, PetD), cytochrome f and the Rieske protein, while the 4 small subunits are PetG, PetL, PetM and PetN. The complex functions as a dimer.

The protein localises to the cellular thylakoid membrane. Component of the cytochrome b6-f complex, which mediates electron transfer between photosystem II (PSII) and photosystem I (PSI), cyclic electron flow around PSI, and state transitions. This chain is Cytochrome b6-f complex subunit 8, found in Synechococcus elongatus (strain ATCC 33912 / PCC 7942 / FACHB-805) (Anacystis nidulans R2).